The primary structure comprises 465 residues: Kynureninase (465 aa).

Pyridoxal 5'-phosphate contacts are provided by residues leucine 116, threonine 117, 144–147 (FPSD), aspartate 231, histidine 234, and tyrosine 256. An N6-(pyridoxal phosphate)lysine modification is found at lysine 257. Positions 291 and 319 each coordinate pyridoxal 5'-phosphate.

The protein belongs to the kynureninase family. Homodimer. Pyridoxal 5'-phosphate serves as cofactor.

Its subcellular location is the cytoplasm. The enzyme catalyses L-kynurenine + H2O = anthranilate + L-alanine + H(+). The catalysed reaction is 3-hydroxy-L-kynurenine + H2O = 3-hydroxyanthranilate + L-alanine + H(+). It functions in the pathway amino-acid degradation; L-kynurenine degradation; L-alanine and anthranilate from L-kynurenine: step 1/1. Its pathway is cofactor biosynthesis; NAD(+) biosynthesis; quinolinate from L-kynurenine: step 2/3. In terms of biological role, catalyzes the cleavage of L-kynurenine (L-Kyn) and L-3-hydroxykynurenine (L-3OHKyn) into anthranilic acid (AA) and 3-hydroxyanthranilic acid (3-OHAA), respectively. This Scheffersomyces stipitis (strain ATCC 58785 / CBS 6054 / NBRC 10063 / NRRL Y-11545) (Yeast) protein is Kynureninase.